Here is an 83-residue protein sequence, read N- to C-terminus: Small ribosomal subunit protein eS21 (83 aa).

It belongs to the eukaryotic ribosomal protein eS21 family. As to quaternary structure, component of the 40S small ribosomal subunit.

It is found in the cytoplasm. Its subcellular location is the cytosol. The protein resides in the rough endoplasmic reticulum. Its function is as follows. Component of the small ribosomal subunit. The ribosome is a large ribonucleoprotein complex responsible for the synthesis of proteins in the cell. The polypeptide is Small ribosomal subunit protein eS21 (rps21) (Ictalurus punctatus (Channel catfish)).